Here is a 686-residue protein sequence, read N- to C-terminus: Eukaryotic translation initiation factor 3 subunit B (686 aa).

The segment at 1 to 29 is disordered; it reads MAKKHAGADANDSDYNEEPNFEDPPGFVD. The segment covering 11–21 has biased composition (acidic residues); sequence NDSDYNEEPNF. Residues 53–137 form the RRM domain; it reads SVVVVDNIPK…HTFAVNLFTD (85 aa). 5 WD repeats span residues 203–242, 289–327, 330–365, 438–480, and 526–571; these read TRER…KIQK, DGMS…LLDL, IKIP…TLME, EIRE…KPSL, and PDHF…IKRT. The stretch at 590–642 forms a coiled coil; it reads AEEKQKEIKKNLKKYYAVFEQKDRLRLTRASKELLEKRAQLRETFMEYRNKRI.

The protein belongs to the eIF-3 subunit B family. As to quaternary structure, component of the eukaryotic translation initiation factor 3 (eIF-3) complex. The eIF-3 complex interacts with pix. Interacts with mxt.

It localises to the cytoplasm. Its function is as follows. RNA-binding component of the eukaryotic translation initiation factor 3 (eIF-3) complex, which is involved in protein synthesis of a specialized repertoire of mRNAs and, together with other initiation factors, stimulates binding of mRNA and methionyl-tRNAi to the 40S ribosome. The eIF-3 complex specifically targets and initiates translation of a subset of mRNAs involved in cell proliferation. The polypeptide is Eukaryotic translation initiation factor 3 subunit B (Drosophila ananassae (Fruit fly)).